A 262-amino-acid polypeptide reads, in one-letter code: Tryptophan synthase alpha chain (262 aa).

Active-site proton acceptor residues include E51 and D62.

The protein belongs to the TrpA family. In terms of assembly, tetramer of two alpha and two beta chains.

The catalysed reaction is (1S,2R)-1-C-(indol-3-yl)glycerol 3-phosphate + L-serine = D-glyceraldehyde 3-phosphate + L-tryptophan + H2O. It functions in the pathway amino-acid biosynthesis; L-tryptophan biosynthesis; L-tryptophan from chorismate: step 5/5. Functionally, the alpha subunit is responsible for the aldol cleavage of indoleglycerol phosphate to indole and glyceraldehyde 3-phosphate. The polypeptide is Tryptophan synthase alpha chain (Oceanobacillus iheyensis (strain DSM 14371 / CIP 107618 / JCM 11309 / KCTC 3954 / HTE831)).